A 388-amino-acid polypeptide reads, in one-letter code: Type II secretion system protein F (388 aa).

The interval 1-28 (MTEGDSARQVRQQLREQGLTPLEVNETT) is disordered. Topologically, residues 1–153 (MTEGDSARQV…HMRTKLLQAM (153 aa)) are cytoplasmic. Ca(2+) is bound by residues glutamate 79, asparagine 133, and aspartate 137. Residues 154-174 (IYPIVLTLVAVGVISILLTAV) traverse the membrane as a helical segment. The Periplasmic portion of the chain corresponds to 175-205 (VPKVVAQFEHMGQQLPATTRFLIGTSELMQH). A helical transmembrane segment spans residues 206 to 226 (YGLWFLLLLFIGGFVWRWWLT). Topologically, residues 227–350 (DEKRRRHWHQ…QDREFETQVN (124 aa)) are cytoplasmic. Residues 351 to 371 (IALGVFEPLLVVSMAGVVLFI) form a helical membrane-spanning segment. Residues 372 to 388 (VMSILQPILELNNMVNL) lie on the Periplasmic side of the membrane.

It belongs to the GSP F family. In terms of assembly, type II secretion system is composed of four main components: the outer membrane complex, the inner membrane complex, the cytoplasmic secretion ATPase and the periplasm-spanning pseudopilus. Homodimer. Interacts with ExeE and ExeL components.

The protein resides in the cell inner membrane. Component of the type II secretion system inner membrane complex required for the energy-dependent secretion of extracellular factors such as proteases and toxins from the periplasm. This chain is Type II secretion system protein F (exeF), found in Aeromonas hydrophila.